A 119-amino-acid polypeptide reads, in one-letter code: Large ribosomal subunit protein bL20 (119 aa).

The protein belongs to the bacterial ribosomal protein bL20 family.

In terms of biological role, binds directly to 23S ribosomal RNA and is necessary for the in vitro assembly process of the 50S ribosomal subunit. It is not involved in the protein synthesizing functions of that subunit. The protein is Large ribosomal subunit protein bL20 of Clostridium novyi (strain NT).